A 124-amino-acid chain; its full sequence is Non-structural protein 2 (124 aa).

A DLNP; interaction with MAP1B motif is present at residues 121–124 (DLNP).

This sequence belongs to the pneumovirus non-structural protein 2 family. Monomer (instable). Homomultimer. Heteromultimer with NS1. Interacts with host RIGI (via N-terminus); this interaction prevents host signaling pathway involved in interferon production. Interacts with host MAP1B/microtubule-associated protein 1B.

The protein localises to the host mitochondrion. Plays a major role in antagonizing the type I IFN-mediated antiviral response. Acts cooperatively with NS1 to repress activation and nuclear translocation of host IFN-regulatory factor IRF3. Interacts with the host cytoplasmic sensor of viral nucleic acids RIGI and prevents the interaction with its downstream partner MAVS. Together with NS2, participates in the proteasomal degradation of host STAT2, IRF3, IRF7, TBK1 and RIGI through a NS-degradasome involving CUL2 and Elongin-C. The degradasome requires an intact mitochondrial MAVS. Induces host SOCS1 expression. Induces activation of NF-kappa-B. Suppresses premature apoptosis by an NF-kappa-B-dependent, interferon-independent mechanism promoting continued viral replication. This Human respiratory syncytial virus B (strain B1) protein is Non-structural protein 2 (1B).